The sequence spans 592 residues: Leucine-rich repeat and immunoglobulin-like domain-containing nogo receptor-interacting protein 3 (592 aa).

A signal peptide spans 1 to 24; it reads MTCWLCVLSLPLLLLPAAPPPAGG. Positions 25–54 constitute an LRRNT domain; sequence CPARCECTVQTRAVACTRRRLTAVPDGIPA. Residues 25 to 531 are Extracellular-facing; sequence CPARCECTVQ…LDLTTILVST (507 aa). LRR repeat units lie at residues 55–76, 79–100, 103–124, 127–148, 151–172, 175–196, 207–228, 247–268, 271–292, 295–316, and 319–340; these read ETRLLELSRNRIRCLNPGDLAA, ALEELDLSENAIAHVEPGAFAN, RLRVLRLRGNQLKLIPPGVFTR, NLTLLDLSENKLVILLDYTFQD, SLRRLEVGDNDLVFVSRRAFAG, ALEELTLERCNLTALSGESLGH, HLAIASLEDQNFRRLPGLLHLE, NLTSLSVTHTNITAVPAAALRH, HLTCLNLSHNPISTVPRGSFRD, RLRELHLAGALLAVVEPQAFLG, and QIRLLNLSNNLLSTLEESTFHS. An N-linked (GlcNAc...) asparagine glycan is attached at asparagine 127. A glycan (N-linked (GlcNAc...) asparagine) is linked at asparagine 185. N-linked (GlcNAc...) asparagine glycans are attached at residues asparagine 247, asparagine 257, and asparagine 276. Asparagine 324 carries an N-linked (GlcNAc...) asparagine glycan. The region spanning 352 to 406 is the LRRCT domain; sequence NPLACDCRLLWIVQRRKTLNFDGRLPACATPAEVRGDALRNLPDSVLFEYFVCRK. Positions 407 to 496 constitute an Ig-like C2-type domain; the sequence is PKIRERRLQR…GNDTYFATLT (90 aa). The cysteines at positions 429 and 480 are disulfide-linked. Residues asparagine 488 and asparagine 512 are each glycosylated (N-linked (GlcNAc...) asparagine). A helical membrane pass occupies residues 532 to 552; it reads AMGCITFLGVVLFCFVLLFVW. The Cytoplasmic portion of the chain corresponds to 553–592; sequence SRGRGQHKNNFSVEYSFRKVDGPAAAAGQGGARKFNMKMI.

It is found in the membrane. The sequence is that of Leucine-rich repeat and immunoglobulin-like domain-containing nogo receptor-interacting protein 3 (LINGO3) from Homo sapiens (Human).